The sequence spans 228 residues: L-ribulose-5-phosphate 4-epimerase UlaF (228 aa).

Substrate contacts are provided by residues 26–27 (GN), 43–44 (SG), and 72–73 (SS). Zn(2+)-binding residues include Asp74, His93, and His95. Asp118 (proton donor/acceptor) is an active-site residue. His167 is a binding site for Zn(2+). Tyr225 (proton donor/acceptor) is an active-site residue.

It belongs to the aldolase class II family. AraD/FucA subfamily. Zn(2+) serves as cofactor.

It carries out the reaction L-ribulose 5-phosphate = D-xylulose 5-phosphate. Its pathway is cofactor degradation; L-ascorbate degradation; D-xylulose 5-phosphate from L-ascorbate: step 4/4. Catalyzes the isomerization of L-ribulose 5-phosphate to D-xylulose 5-phosphate. Is involved in the anaerobic L-ascorbate utilization. In Escherichia coli O7:K1 (strain IAI39 / ExPEC), this protein is L-ribulose-5-phosphate 4-epimerase UlaF.